Here is a 368-residue protein sequence, read N- to C-terminus: Biotin synthase (368 aa).

Residues 46 to 277 (VHGDEVALCG…AAHIFVMGGR (232 aa)) enclose the Radical SAM core domain. [4Fe-4S] cluster-binding residues include Cys64, Cys68, and Cys71. Residues Ser109, Cys142, and Cys202 each coordinate [2Fe-2S] cluster. The disordered stretch occupies residues 347–368 (RAAEPGGKRGLPVVGPPRGGCA).

The protein belongs to the radical SAM superfamily. Biotin synthase family. As to quaternary structure, homodimer. [4Fe-4S] cluster serves as cofactor. It depends on [2Fe-2S] cluster as a cofactor.

It carries out the reaction (4R,5S)-dethiobiotin + (sulfur carrier)-SH + 2 reduced [2Fe-2S]-[ferredoxin] + 2 S-adenosyl-L-methionine = (sulfur carrier)-H + biotin + 2 5'-deoxyadenosine + 2 L-methionine + 2 oxidized [2Fe-2S]-[ferredoxin]. It functions in the pathway cofactor biosynthesis; biotin biosynthesis; biotin from 7,8-diaminononanoate: step 2/2. Functionally, catalyzes the conversion of dethiobiotin (DTB) to biotin by the insertion of a sulfur atom into dethiobiotin via a radical-based mechanism. This Anaeromyxobacter sp. (strain Fw109-5) protein is Biotin synthase.